The following is a 216-amino-acid chain: Probable GTP-binding protein EngB (216 aa).

Residues 23-197 (EGAEIAFAGR…EHKVAGWLGL (175 aa)) form the EngB-type G domain. GTP is bound by residues 31-38 (GRSNAGKS), 58-62 (GRTQL), 76-79 (DLPG), 143-146 (TKCD), and 176-178 (FSS). Mg(2+) is bound by residues S38 and T60.

The protein belongs to the TRAFAC class TrmE-Era-EngA-EngB-Septin-like GTPase superfamily. EngB GTPase family. Mg(2+) serves as cofactor.

In terms of biological role, necessary for normal cell division and for the maintenance of normal septation. The protein is Probable GTP-binding protein EngB of Aromatoleum aromaticum (strain DSM 19018 / LMG 30748 / EbN1) (Azoarcus sp. (strain EbN1)).